The sequence spans 194 residues: Cell division protein SepF (194 aa).

Disordered regions lie at residues 35-54 (DHRSDHASGGALATPSDSSP) and 159-194 (SAPSMVSQDHDSVPSSSQQTGAAPVPAWEATSAGGL).

This sequence belongs to the SepF family. As to quaternary structure, homodimer. Interacts with FtsZ.

It localises to the cytoplasm. In terms of biological role, cell division protein that is part of the divisome complex and is recruited early to the Z-ring. Probably stimulates Z-ring formation, perhaps through the cross-linking of FtsZ protofilaments. Its function overlaps with FtsA. This is Cell division protein SepF from Prochlorococcus marinus (strain MIT 9313).